The chain runs to 74 residues: Omega-conotoxin-like PuIIA (74 aa).

Positions 1–22 (MKLTCVVIVAVLFLTACQLITA) are cleaved as a signal peptide. Positions 23 to 46 (ETYSRGEQKHRALSSTDKNSKLTR) are excised as a propeptide. Cystine bridges form between Cys48–Cys62, Cys55–Cys66, and Cys61–Cys73.

Belongs to the conotoxin O1 superfamily. Expressed by the venom duct.

The protein localises to the secreted. Its function is as follows. Omega-conotoxins act at presynaptic membranes, they bind and block voltage-gated calcium channels (Cav). This Conus pulicarius (Flea-bitten cone) protein is Omega-conotoxin-like PuIIA.